A 141-amino-acid chain; its full sequence is MAKKVEKLVKLQIPAGKATPAPPVGPALGQAGINIMGFTKEFNARTADQAGMIIPVVISVYEDKSFDFITKTPPAAVLLKKAAGVEKGSGEPNKTKVATVTRAQVQEIAETKMPDLNAANLESAMRMIEGTARSMGFTVTD.

This sequence belongs to the universal ribosomal protein uL11 family. As to quaternary structure, part of the ribosomal stalk of the 50S ribosomal subunit. Interacts with L10 and the large rRNA to form the base of the stalk. L10 forms an elongated spine to which L12 dimers bind in a sequential fashion forming a multimeric L10(L12)X complex. In terms of processing, one or more lysine residues are methylated.

In terms of biological role, forms part of the ribosomal stalk which helps the ribosome interact with GTP-bound translation factors. In Streptococcus agalactiae serotype III (strain NEM316), this protein is Large ribosomal subunit protein uL11.